The sequence spans 258 residues: Imidazole glycerol phosphate synthase subunit HisF (258 aa).

Catalysis depends on residues aspartate 11 and aspartate 130.

It belongs to the HisA/HisF family. Heterodimer of HisH and HisF.

The protein localises to the cytoplasm. It carries out the reaction 5-[(5-phospho-1-deoxy-D-ribulos-1-ylimino)methylamino]-1-(5-phospho-beta-D-ribosyl)imidazole-4-carboxamide + L-glutamine = D-erythro-1-(imidazol-4-yl)glycerol 3-phosphate + 5-amino-1-(5-phospho-beta-D-ribosyl)imidazole-4-carboxamide + L-glutamate + H(+). Its pathway is amino-acid biosynthesis; L-histidine biosynthesis; L-histidine from 5-phospho-alpha-D-ribose 1-diphosphate: step 5/9. Its function is as follows. IGPS catalyzes the conversion of PRFAR and glutamine to IGP, AICAR and glutamate. The HisF subunit catalyzes the cyclization activity that produces IGP and AICAR from PRFAR using the ammonia provided by the HisH subunit. In Salmonella arizonae (strain ATCC BAA-731 / CDC346-86 / RSK2980), this protein is Imidazole glycerol phosphate synthase subunit HisF.